The following is a 504-amino-acid chain: Ribonuclease Y (504 aa).

Residues 194-279 form the KH domain; that stretch reads TVHVVSLPND…EMVEKAKQEV (86 aa). The 94-residue stretch at 320 to 413 folds into the HD domain; that stretch reads VLKHSMEVAY…VQAADAISAA (94 aa).

It belongs to the RNase Y family.

Functionally, endoribonuclease that initiates mRNA decay. In Clostridium novyi (strain NT), this protein is Ribonuclease Y.